A 311-amino-acid polypeptide reads, in one-letter code: tRNA-cytidine(32) 2-sulfurtransferase (311 aa).

Positions 47–52 (SGGKDS) match the PP-loop motif motif. Residues cysteine 122, cysteine 125, and cysteine 213 each coordinate [4Fe-4S] cluster.

It belongs to the TtcA family. In terms of assembly, homodimer. Requires Mg(2+) as cofactor. The cofactor is [4Fe-4S] cluster.

The protein resides in the cytoplasm. It carries out the reaction cytidine(32) in tRNA + S-sulfanyl-L-cysteinyl-[cysteine desulfurase] + AH2 + ATP = 2-thiocytidine(32) in tRNA + L-cysteinyl-[cysteine desulfurase] + A + AMP + diphosphate + H(+). The protein operates within tRNA modification. Functionally, catalyzes the ATP-dependent 2-thiolation of cytidine in position 32 of tRNA, to form 2-thiocytidine (s(2)C32). The sulfur atoms are provided by the cysteine/cysteine desulfurase (IscS) system. In Escherichia coli O7:K1 (strain IAI39 / ExPEC), this protein is tRNA-cytidine(32) 2-sulfurtransferase.